Consider the following 780-residue polypeptide: Lon protease (780 aa).

Residues 11–204 (IPVLPLRDVV…RLMAIMESEI (194 aa)) form the Lon N-terminal domain. 356–363 (GPPGVGKT) is an ATP binding site. The 182-residue stretch at 592–773 (KNQIGQVIGL…KEVLNLSLEN (182 aa)) folds into the Lon proteolytic domain. Residues serine 679 and lysine 722 contribute to the active site.

The protein belongs to the peptidase S16 family. In terms of assembly, homohexamer. Organized in a ring with a central cavity.

The protein resides in the cytoplasm. The enzyme catalyses Hydrolysis of proteins in presence of ATP.. Functionally, ATP-dependent serine protease that mediates the selective degradation of mutant and abnormal proteins as well as certain short-lived regulatory proteins. Required for cellular homeostasis and for survival from DNA damage and developmental changes induced by stress. Degrades polypeptides processively to yield small peptide fragments that are 5 to 10 amino acids long. Binds to DNA in a double-stranded, site-specific manner. The protein is Lon protease of Buchnera aphidicola subsp. Baizongia pistaciae (strain Bp).